A 481-amino-acid chain; its full sequence is UDP-N-acetylmuramate--L-alanine ligase (481 aa).

135 to 141 (GTHGKTT) serves as a coordination point for ATP.

Belongs to the MurCDEF family.

The protein localises to the cytoplasm. The enzyme catalyses UDP-N-acetyl-alpha-D-muramate + L-alanine + ATP = UDP-N-acetyl-alpha-D-muramoyl-L-alanine + ADP + phosphate + H(+). Its pathway is cell wall biogenesis; peptidoglycan biosynthesis. In terms of biological role, cell wall formation. The protein is UDP-N-acetylmuramate--L-alanine ligase of Nostoc punctiforme (strain ATCC 29133 / PCC 73102).